Here is a 132-residue protein sequence, read N- to C-terminus: MATHNSLFQDSDVRKHPEGIAVSVQLPWYRSLWLSAVDDVAATVNGVKIPRESLRFELQGQTYSIAELPEQWETLWFVADKPDVVIPLDRIPDAGEEIDVEVILTLRLLYMQIAPMRYVGNRVAVERKVVLA.

This sequence belongs to the C-glycoside deglycosidase beta subunit family. As to quaternary structure, heterodimer composed of an alpha subunit (CarB2) and a beta subunit (CarC2). A divalent metal cation is required as a cofactor.

It carries out the reaction 3''-dehydroorientin = 1,5-anhydro-D-erythro-hex-1-en-3-ulose + luteolin. Activity is strongly reduced in the presence of chelating agents. Functionally, carbon-carbon bond-cleaving enzyme which participates in the metabolism of C-glycosides. Acts on the C8-glycosylated compound 3''-dehydroorientin (3''-oxo-orientin). This Arthrobacter globiformis (strain ATCC 8010 / DSM 20124 / JCM 1332 / NBRC 12137 / NCIMB 8907 / NRRL B-2979 / 168) protein is C-glycoside deglycosidase beta subunit.